A 185-amino-acid chain; its full sequence is MVKCTPLLALTVIVSAGSDALSDPTVKRLAKLATINQAPATQSNSDSKRVLRASDVPDEVAAGESRSPKSLWPWEVEDKLAPLKEKLISTSADDLEAGGSANKNALPMIWRWLWQNQIETKKTPIDEISKEVQTAMDLISSQATHEELNKAGVSVSDYVKALRFTLSDIDVVNRGMEYNIHLGNK.

The signal sequence occupies residues 1 to 20 (MVKCTPLLALTVIVSAGSDA). The RxLR-dEER signature appears at 49–66 (RVLRASDVPDEVAAGESR).

It belongs to the RxLR effector family.

The protein resides in the secreted. The protein localises to the host cell. Its function is as follows. Secreted effector that acts as an elicitor of hypersensitive response (HR) specifically on plants carrying defense protein RPP39. The allele ATR39-1 is recognized by RPP39, whereas the ATR39-2 allele is not recognized. The protein is Avirulence protein ATR39-1 of Hyaloperonospora arabidopsidis (strain Emoy2) (Downy mildew agent).